Reading from the N-terminus, the 216-residue chain is FMN-dependent NADH:quinone oxidoreductase 2 (216 aa).

Residues Ser-9, 15 to 17 (SVS), 96 to 99 (MYNF), and 140 to 143 (SRGG) contribute to the FMN site.

Belongs to the azoreductase type 1 family. In terms of assembly, homodimer. Requires FMN as cofactor.

It carries out the reaction 2 a quinone + NADH + H(+) = 2 a 1,4-benzosemiquinone + NAD(+). The enzyme catalyses N,N-dimethyl-1,4-phenylenediamine + anthranilate + 2 NAD(+) = 2-(4-dimethylaminophenyl)diazenylbenzoate + 2 NADH + 2 H(+). Its function is as follows. Quinone reductase that provides resistance to thiol-specific stress caused by electrophilic quinones. Also exhibits azoreductase activity. Catalyzes the reductive cleavage of the azo bond in aromatic azo compounds to the corresponding amines. The polypeptide is FMN-dependent NADH:quinone oxidoreductase 2 (Xanthomonas euvesicatoria pv. vesicatoria (strain 85-10) (Xanthomonas campestris pv. vesicatoria)).